The following is a 235-amino-acid chain: uncharacterized protein (235 aa).

An S4 RNA-binding domain is found at 2–69; sequence CRLAKIISNA…KPRLWIYYKP (68 aa). The Nucleophile role is filled by Asp-102.

It belongs to the pseudouridine synthase RsuA family.

It catalyses the reaction a uridine in RNA = a pseudouridine in RNA. This is an uncharacterized protein from Rickettsia prowazekii (strain Madrid E).